Consider the following 92-residue polypeptide: Small ribosomal subunit protein uS19c (92 aa).

Belongs to the universal ribosomal protein uS19 family.

It is found in the plastid. Its subcellular location is the chloroplast. In terms of biological role, protein S19 forms a complex with S13 that binds strongly to the 16S ribosomal RNA. The chain is Small ribosomal subunit protein uS19c from Nasturtium officinale (Watercress).